The chain runs to 370 residues: tRNA 2-selenouridine synthase (370 aa).

In terms of domain architecture, Rhodanese spans 12–136 (FLDDVPMMDM…MRTFLLETTQ (125 aa)). Residue Cys-95 is the S-selanylcysteine intermediate of the active site.

Belongs to the SelU family. Monomer.

It carries out the reaction 5-methylaminomethyl-2-thiouridine(34) in tRNA + selenophosphate + (2E)-geranyl diphosphate + H2O + H(+) = 5-methylaminomethyl-2-selenouridine(34) in tRNA + (2E)-thiogeraniol + phosphate + diphosphate. The catalysed reaction is 5-methylaminomethyl-2-thiouridine(34) in tRNA + (2E)-geranyl diphosphate = 5-methylaminomethyl-S-(2E)-geranyl-thiouridine(34) in tRNA + diphosphate. It catalyses the reaction 5-methylaminomethyl-S-(2E)-geranyl-thiouridine(34) in tRNA + selenophosphate + H(+) = 5-methylaminomethyl-2-(Se-phospho)selenouridine(34) in tRNA + (2E)-thiogeraniol. The enzyme catalyses 5-methylaminomethyl-2-(Se-phospho)selenouridine(34) in tRNA + H2O = 5-methylaminomethyl-2-selenouridine(34) in tRNA + phosphate. Functionally, involved in the post-transcriptional modification of the uridine at the wobble position (U34) of tRNA(Lys), tRNA(Glu) and tRNA(Gln). Catalyzes the conversion of 2-thiouridine (S2U-RNA) to 2-selenouridine (Se2U-RNA). Acts in a two-step process involving geranylation of 2-thiouridine (S2U) to S-geranyl-2-thiouridine (geS2U) and subsequent selenation of the latter derivative to 2-selenouridine (Se2U) in the tRNA chain. This chain is tRNA 2-selenouridine synthase, found in Pseudomonas putida (strain ATCC 700007 / DSM 6899 / JCM 31910 / BCRC 17059 / LMG 24140 / F1).